The primary structure comprises 501 residues: Aldehyde dehydrogenase 1A1 (501 aa).

S2 bears the N-acetylserine mark. Residues K91 and K128 each carry the N6-acetyllysine modification. Residues 167–170, 193–196, 226–227, and 246–247 each bind NAD(+); these read IPWN, KPAE, GP, and GS. Residue K252 is modified to N6-acetyllysine. E269 (proton acceptor) is an active-site residue. An NAD(+)-binding site is contributed by 269-271; it reads ELG. The Nucleophile role is filled by C303. Residues 336–501 form a mediates interaction with PRMT3 region; that stretch reads LTPGVSQGPQ…VTIKISQKNS (166 aa). T337 carries the post-translational modification Phosphothreonine. Residue 349 to 353 coordinates NAD(+); that stretch reads EQYEK. N6-acetyllysine is present on residues K353 and K367. 400–402 lines the NAD(+) pocket; that stretch reads EIF. Position 410 is an N6-acetyllysine (K410). Phosphoserine is present on S413. An N6-acetyllysine mark is found at K419 and K495.

Belongs to the aldehyde dehydrogenase family. In terms of assembly, homotetramer. Interacts with PRMT3; the interaction is direct, inhibits ALDH1A1 aldehyde dehydrogenase activity and is independent of the methyltransferase activity of PRMT3. In terms of processing, the N-terminus is blocked most probably by acetylation.

The protein resides in the cytoplasm. Its subcellular location is the cytosol. It localises to the cell projection. It is found in the axon. It carries out the reaction an aldehyde + NAD(+) + H2O = a carboxylate + NADH + 2 H(+). The enzyme catalyses all-trans-retinal + NAD(+) + H2O = all-trans-retinoate + NADH + 2 H(+). It catalyses the reaction 9-cis-retinal + NAD(+) + H2O = 9-cis-retinoate + NADH + 2 H(+). The catalysed reaction is 11-cis-retinal + NAD(+) + H2O = 11-cis-retinoate + NADH + 2 H(+). It carries out the reaction 13-cis-retinal + NAD(+) + H2O = 13-cis-retinoate + NADH + 2 H(+). The enzyme catalyses 3-deoxyglucosone + NAD(+) + H2O = 2-dehydro-3-deoxy-D-gluconate + NADH + 2 H(+). It catalyses the reaction (E)-4-hydroxynon-2-enal + NAD(+) + H2O = (E)-4-hydroxynon-2-enoate + NADH + 2 H(+). The catalysed reaction is malonaldehyde + NAD(+) + H2O = 3-oxopropanoate + NADH + 2 H(+). It carries out the reaction hexanal + NAD(+) + H2O = hexanoate + NADH + 2 H(+). The enzyme catalyses propanal + NAD(+) + H2O = propanoate + NADH + 2 H(+). It catalyses the reaction acetaldehyde + NAD(+) + H2O = acetate + NADH + 2 H(+). The catalysed reaction is benzaldehyde + NAD(+) + H2O = benzoate + NADH + 2 H(+). It carries out the reaction 4-aminobutanal + NAD(+) + H2O = 4-aminobutanoate + NADH + 2 H(+). It participates in cofactor metabolism; retinol metabolism. With respect to regulation, inhibited by duocarmycin analogs. Functionally, cytosolic dehydrogenase that catalyzes the irreversible oxidation of a wide range of aldehydes to their corresponding carboxylic acid. Functions downstream of retinol dehydrogenases and catalyzes the oxidation of retinaldehyde into retinoic acid, the second step in the oxidation of retinol/vitamin A into retinoic acid. This pathway is crucial to control the levels of retinol and retinoic acid, two important molecules which excess can be teratogenic and cytotoxic. Also oxidizes aldehydes resulting from lipid peroxidation like (E)-4-hydroxynon-2-enal/HNE, malonaldehyde and hexanal that form protein adducts and are highly cytotoxic. By participating for instance to the clearance of (E)-4-hydroxynon-2-enal/HNE in the lens epithelium prevents the formation of HNE-protein adducts and lens opacification. Also functions downstream of fructosamine-3-kinase in the fructosamine degradation pathway by catalyzing the oxidation of 3-deoxyglucosone, the carbohydrate product of fructosamine 3-phosphate decomposition, which is itself a potent glycating agent that may react with lysine and arginine side-chains of proteins. Also has an aminobutyraldehyde dehydrogenase activity and is probably part of an alternative pathway for the biosynthesis of GABA/4-aminobutanoate in midbrain, thereby playing a role in GABAergic synaptic transmission. This chain is Aldehyde dehydrogenase 1A1, found in Ovis aries (Sheep).